The following is a 395-amino-acid chain: Phosphonoacetaldehyde reductase (395 aa).

Positions 199, 268, and 282 each coordinate Fe cation.

It belongs to the iron-containing alcohol dehydrogenase family. The cofactor is Fe cation.

The enzyme catalyses 2-hydroxyethylphosphonate + NAD(+) = phosphonoacetaldehyde + NADH + H(+). It functions in the pathway secondary metabolite biosynthesis; bialaphos biosynthesis. In terms of biological role, catalyzes the reduction of phosphonoacetaldehyde to 2-hydroxyethylphosphonate, a step in the biosynthesis of phosphinothricin tripeptide. Phosphinothricin tripeptide (PTT), also known as bialaphos (BA), is a natural-product antibiotic and potent herbicide. Can use both NAD and NADP but the preferred substrate is NAD. The protein is Phosphonoacetaldehyde reductase (phpC) of Streptomyces viridochromogenes (strain DSM 40736 / JCM 4977 / BCRC 1201 / Tue 494).